The sequence spans 98 residues: Ig heavy chain V region 6.96 (98 aa).

Residues 1–98 (EVQLVESGGG…EDTAMYYCAR (98 aa)) enclose the Ig-like domain.

The protein is Ig heavy chain V region 6.96 of Mus musculus (Mouse).